The chain runs to 147 residues: MSQGSKPTSSDIAINQRVGATVEGFRVVSTRLRSAEYESFSHQARLLGLSDSMAIRVAVRRIGGFLEIDAETRHKMEAILLSIGTLSSNIAALLSAYAENPTMDLEALRAERIAFGESFADLDGLLRSILSVSRRRIDGCSMLKDSL.

In terms of biological role, tumor formation by A.tumefaciens involves the transfer and integration of a defined segment (T-DNA) of Ti plasmid DNA into the plant nuclear genome. The virD operon encodes a site-specific endonuclease that cleaves at a unique site within both 24 bp direct repeats flanking the T-DNA. In Rhizobium rhizogenes (Agrobacterium rhizogenes), this protein is T-DNA border endonuclease VirD1 (virD1).